The following is a 94-amino-acid chain: Probable HNH endonuclease (94 aa).

Belongs to the skunalikevirus HNH endonuclease family.

Its function is as follows. Probable HNH endonuclease. The protein is Probable HNH endonuclease of Lactococcus lactis (Lactococcus lactis bacteriophage SK1).